We begin with the raw amino-acid sequence, 593 residues long: DEAD-box ATP-dependent RNA helicase 18 (593 aa).

Residues F16 to A44 carry the Q motif motif. The Helicase ATP-binding domain maps to I47–V226. A60–T67 contacts ATP. A DEAD box motif is present at residues D174 to D177. Residues Q264–D411 form the Helicase C-terminal domain. Residues Q506–E524 are compositionally biased toward basic and acidic residues. Residues Q506–E561 are disordered.

Belongs to the DEAD box helicase family. DDX55/SPB4 subfamily.

The enzyme catalyses ATP + H2O = ADP + phosphate + H(+). In Arabidopsis thaliana (Mouse-ear cress), this protein is DEAD-box ATP-dependent RNA helicase 18 (RH18).